Reading from the N-terminus, the 750-residue chain is K(+)-insensitive pyrophosphate-energized proton pump (750 aa).

5 helical membrane passes run 1-21, 51-71, 78-98, 133-153, and 161-181; these read MYGL…YQGI, FIII…GGLN, VVFI…VAWF, IGML…LFIP, and FIGF…AGGI. Residue lysine 184 coordinates substrate. The Mg(2+) site is built by aspartate 187, aspartate 191, and aspartate 216. A run of 6 helical transmembrane segments spans residues 227 to 247, 257 to 277, 301 to 321, 327 to 347, 391 to 411, and 420 to 440; these read DGFE…LLAI, LVWI…SYWV, LVWL…YMLI, GTMW…GALI, WMGL…TLGL, and VFAF…TIAV. Aspartate 448 serves as a coordination point for Mg(2+). Helical transmembrane passes span 503-523, 538-558, 607-627, and 629-649; these read VLIG…IMIL, ILWP…YWFT, GMIN…CLES, and LFIG…IFMA. Aspartate 656, aspartate 681, and aspartate 685 together coordinate Ca(2+). Lysine 688 contributes to the substrate binding site. A run of 2 helical transmembrane segments spans residues 694–714 and 716–736; these read ALNP…ELAI and LPTT…LVFV.

Belongs to the H(+)-translocating pyrophosphatase (TC 3.A.10) family. K(+)-insensitive subfamily. As to quaternary structure, homodimer. It depends on Mg(2+) as a cofactor.

The protein localises to the cell inner membrane. It carries out the reaction diphosphate + H2O + H(+)(in) = 2 phosphate + 2 H(+)(out). In terms of biological role, proton pump that utilizes the energy of pyrophosphate hydrolysis as the driving force for proton movement across the membrane. Generates a proton motive force. The sequence is that of K(+)-insensitive pyrophosphate-energized proton pump from Chlorobaculum tepidum (strain ATCC 49652 / DSM 12025 / NBRC 103806 / TLS) (Chlorobium tepidum).